The primary structure comprises 83 residues: Major outer membrane lipoprotein (83 aa).

The signal sequence occupies residues 1 to 19 (MNNVLKFSALALAAVLATG). Cys-20 carries the N-palmitoyl cysteine lipid modification. Cys-20 carries S-diacylglycerol cysteine lipidation.

The protein localises to the cell outer membrane. This chain is Major outer membrane lipoprotein (oprI), found in Pseudomonas aeruginosa (strain ATCC 15692 / DSM 22644 / CIP 104116 / JCM 14847 / LMG 12228 / 1C / PRS 101 / PAO1).